The chain runs to 213 residues: Ferric nitrobindin-like protein (213 aa).

Residues 17–42 form a disordered region; that stretch reads VNLAAEQSKSTSDKNLPEFGDMPIPD. The short motif at 65 to 71 is the GXWXGXG element; it reads GVWRGQG.

Belongs to the nitrobindin family.

In Corynebacterium jeikeium (strain K411), this protein is Ferric nitrobindin-like protein.